Consider the following 236-residue polypeptide: Purine nucleoside phosphorylase DeoD-type (236 aa).

Histidine 5 lines the a purine D-ribonucleoside pocket. Phosphate is bound by residues glycine 21, arginine 25, arginine 44, and 88–91 (RIGS). Residues 180 to 182 (EME) and 204 to 205 (SD) each bind a purine D-ribonucleoside. Aspartate 205 functions as the Proton donor in the catalytic mechanism.

It belongs to the PNP/UDP phosphorylase family. Homohexamer; trimer of homodimers.

The catalysed reaction is a purine D-ribonucleoside + phosphate = a purine nucleobase + alpha-D-ribose 1-phosphate. It catalyses the reaction a purine 2'-deoxy-D-ribonucleoside + phosphate = a purine nucleobase + 2-deoxy-alpha-D-ribose 1-phosphate. In terms of biological role, catalyzes the reversible phosphorolytic breakdown of the N-glycosidic bond in the beta-(deoxy)ribonucleoside molecules, with the formation of the corresponding free purine bases and pentose-1-phosphate. The polypeptide is Purine nucleoside phosphorylase DeoD-type (Hahella chejuensis (strain KCTC 2396)).